A 1363-amino-acid polypeptide reads, in one-letter code: Collagen alpha-2(I) chain (1363 aa).

A signal peptide spans Met1–Ser22. Residue Gln23 is modified to Pyrrolidone carboxylic acid. Positions Gln23 to Ala77 are cleaved as a propeptide — N-terminal propeptide. The interval Ala28 to Gly1110 is disordered. Over residues Pro59–Pro69 the composition is skewed to pro residues. Gln78 carries the post-translational modification Pyrrolidone carboxylic acid. Allysine is present on Lys83. The span at Gly88–Pro97 shows a compositional bias: low complexity. Positions Arg98–Pro110 are enriched in pro residues. Low complexity predominate over residues Phe112–Gln128. Over residues Ala140–Glu154 the composition is skewed to basic and acidic residues. Lys176 carries the 5-hydroxylysine; alternate modification. An O-linked (Gal...) hydroxylysine; alternate glycan is attached at Lys176. 2 stretches are compositionally biased toward low complexity: residues Ile224 to Lys263 and Pro299 to Pro320. Pro residues predominate over residues Leu322–Ala335. Pro440 and Pro443 each carry 4-hydroxyproline. Composition is skewed to low complexity over residues Pro601–Pro610 and Arg674–Pro683. Residues Gly684–Gly699 are compositionally biased toward gly residues. Residues Pro721–Ala736 show a composition bias toward low complexity. Positions Lys737–Lys746 are enriched in basic and acidic residues. Composition is skewed to low complexity over residues Glu748 to Val794, Ala842 to Pro875, Val898 to Asn931, Pro955 to His965, and Val986 to Arg995. A compositionally biased stretch (basic and acidic residues) spans Arg1004–His1015. Low complexity predominate over residues Gln1036 to Ala1049. 2 stretches are compositionally biased toward pro residues: residues Pro1051–Pro1060 and Ala1088–Pro1102. A propeptide spans Ala1118–Lys1363 (C-terminal propeptide). Residues Tyr1128–Lys1363 enclose the Fibrillar collagen NC1 domain. 3 disulfide bridges follow: Cys1158–Cys1190, Cys1198–Cys1361, and Cys1269–Cys1314. Ca(2+) contacts are provided by Asp1176, Asn1178, Gln1179, Cys1181, and Asp1184. Asn1264 carries an N-linked (GlcNAc...) asparagine glycan.

The protein belongs to the fibrillar collagen family. As to quaternary structure, trimers of one alpha 2(I) and two alpha 1(I) chains. Prolines at the third position of the tripeptide repeating unit (G-X-Y) are hydroxylated in some or all of the chains. Post-translationally, the N-terminus of the mature protein is blocked. Forms the fibrils of tendon, ligaments and bones. In bones the fibrils are mineralized with calcium hydroxyapatite.

The protein localises to the secreted. It localises to the extracellular space. The protein resides in the extracellular matrix. Functionally, type I collagen is a member of group I collagen (fibrillar forming collagen). The protein is Collagen alpha-2(I) chain (COL1A2) of Gallus gallus (Chicken).